A 375-amino-acid polypeptide reads, in one-letter code: Coproporphyrin III ferrochelatase (375 aa).

2 residues coordinate Fe-coproporphyrin III: Ser-59 and Tyr-128. Fe(2+) contacts are provided by His-191 and Glu-286.

It belongs to the ferrochelatase family.

Its subcellular location is the cytoplasm. The enzyme catalyses Fe-coproporphyrin III + 2 H(+) = coproporphyrin III + Fe(2+). Its pathway is porphyrin-containing compound metabolism; protoheme biosynthesis. Its function is as follows. Involved in coproporphyrin-dependent heme b biosynthesis. Catalyzes the insertion of ferrous iron into coproporphyrin III to form Fe-coproporphyrin III. The polypeptide is Coproporphyrin III ferrochelatase (Streptomyces coelicolor (strain ATCC BAA-471 / A3(2) / M145)).